The primary structure comprises 389 residues: Pyruvylated Gal-beta-1,3-epitope synthesis protein 2 (389 aa).

The Cytoplasmic portion of the chain corresponds to 1-16 (MTKLWVNFFSQKLLRL). Residues 17-37 (LIPSIIVVFAFAALFAIYSPI) form a helical membrane-spanning segment. Over 38–389 (QLGGINFYKR…WSNSFDLITA (352 aa)) the chain is Lumenal.

It is found in the endoplasmic reticulum membrane. The protein resides in the golgi apparatus membrane. In terms of biological role, involved in cell wall biogenesis. Has a role in the addition of Gal-beta1,3 moeities to galactomannans and their subsequent pyruvylation. Has a role in meiosis. The protein is Pyruvylated Gal-beta-1,3-epitope synthesis protein 2 (pvg2) of Schizosaccharomyces pombe (strain 972 / ATCC 24843) (Fission yeast).